The chain runs to 84 residues: Sporulation-specific transcription factor SpoVIF (84 aa).

Its subcellular location is the cytoplasm. Transcription factor involved in spore coat assembly and spore resistance. Required for gene regulation during the latter stages of sporulation. Regulates the transcription of at least cgeA, cotG and cotS. May directly or indirectly control the function of the GerE protein. The polypeptide is Sporulation-specific transcription factor SpoVIF (Bacillus subtilis (strain 168)).